We begin with the raw amino-acid sequence, 356 residues long: 11-beta-hydroxysteroid dehydrogenase (356 aa).

A helical; Signal-anchor for type II membrane protein membrane pass occupies residues 10-30; sequence LVVPPAGLLMLAFAWPSLAFF. The Proline-knob signature appears at 13-26; it reads PPAGLLMLAFAWPS. Residue 54 to 85 coordinates NADP(+); the sequence is GASSGIGEQIAYQYAKRRANLVLVARREHRLR. S184 lines the substrate pocket. The Proton acceptor role is filled by Y197. Residues 197 to 201 and K201 each bind NADP(+); that span reads YNAAK.

It belongs to the short-chain dehydrogenases/reductases (SDR) family. As to expression, expressed in megagametophytes (at protein level).

It localises to the lipid droplet. The protein resides in the membrane. The catalysed reaction is an 11beta-hydroxysteroid + NADP(+) = an 11-oxosteroid + NADPH + H(+). It carries out the reaction corticosterone + NADP(+) = 11-dehydrocorticosterone + NADPH + H(+). It catalyses the reaction 17beta-estradiol + NADP(+) = estrone + NADPH + H(+). Has dehydrogenase activity against corticosterone (11 beta-hydroxysteroid) and estradiol (17 beta-hydroxysteroid) in the presence of NADP(+). May be involved in signal transduction regulated by various sterols. This chain is 11-beta-hydroxysteroid dehydrogenase, found in Pinus massoniana (Chinese red pine).